We begin with the raw amino-acid sequence, 292 residues long: Bifunctional protein FolD (292 aa).

Residues 169 to 171 (GRS) and S194 each bind NADP(+).

This sequence belongs to the tetrahydrofolate dehydrogenase/cyclohydrolase family. Homodimer.

The enzyme catalyses (6R)-5,10-methylene-5,6,7,8-tetrahydrofolate + NADP(+) = (6R)-5,10-methenyltetrahydrofolate + NADPH. It catalyses the reaction (6R)-5,10-methenyltetrahydrofolate + H2O = (6R)-10-formyltetrahydrofolate + H(+). The protein operates within one-carbon metabolism; tetrahydrofolate interconversion. Catalyzes the oxidation of 5,10-methylenetetrahydrofolate to 5,10-methenyltetrahydrofolate and then the hydrolysis of 5,10-methenyltetrahydrofolate to 10-formyltetrahydrofolate. The sequence is that of Bifunctional protein FolD from Nostoc punctiforme (strain ATCC 29133 / PCC 73102).